We begin with the raw amino-acid sequence, 389 residues long: Methane monooxygenase component A beta chain (389 aa).

M.capsulatus has two forms of methane monooxygenase, a soluble and a membrane-bound type. The soluble type consists of four components (A to D): protein A, comprising three chains, in an alpha-2, beta-2, gamma-2 configuration, is a nonheme iron protein containing an unusual mu-hydroxo bridge structure at its active site and interacts with both oxygen and methane.

The catalysed reaction is methane + NADH + O2 + H(+) = methanol + NAD(+) + H2O. It carries out the reaction methane + NADPH + O2 + H(+) = methanol + NADP(+) + H2O. Functionally, responsible for the initial oxygenation of methane to methanol in methanotrophs. It also catalyzes the monohydroxylation of a variety of unactivated alkenes, alicyclic, aromatic and heterocyclic compounds. This Methylococcus capsulatus (strain ATCC 33009 / NCIMB 11132 / Bath) protein is Methane monooxygenase component A beta chain (mmoY).